Reading from the N-terminus, the 498-residue chain is L-amino acid oxidase (498 aa).

The first 11 residues, 1-11 (SLLFLAAVGSC), serve as a signal peptide directing secretion. Cys21 and Cys184 are joined by a disulfide. FAD contacts are provided by residues 54 to 55 (MS), 74 to 75 (EA), 74 to 78 (EASER), Arg82, and 98 to 101 (GPMR). Residue Arg101 participates in substrate binding. Residue Asn183 is glycosylated (N-linked (GlcNAc...) asparagine). His234 serves as a coordination point for substrate. Val272 is an FAD binding site. Cys342 and Cys423 form a disulfide bridge. Tyr383 lines the substrate pocket. Residues Glu468, 475-480 (GWIDST), and 476-480 (WIDST) each bind FAD. 475 to 476 (GW) provides a ligand contact to substrate.

It belongs to the flavin monoamine oxidase family. FIG1 subfamily. As to quaternary structure, homodimer; non-covalently linked. Requires FAD as cofactor. In terms of processing, N-glycosylated. Contains 18.73% carbohydrates. Expressed by the venom gland.

The protein resides in the secreted. The enzyme catalyses an L-alpha-amino acid + O2 + H2O = a 2-oxocarboxylate + H2O2 + NH4(+). It carries out the reaction L-leucine + O2 + H2O = 4-methyl-2-oxopentanoate + H2O2 + NH4(+). Strongly inhibited by glutathione, and moderately inhibited by PMSF, acetate iodine and glutamic acid. Is also inhibited by Zn(2+) ions, but not by Ca(2+), Mg(2+) and Mn(2+). Catalyzes an oxidative deamination of predominantly hydrophobic and aromatic L-amino acids, thus producing hydrogen peroxide that may contribute to the diverse toxic effects of this enzyme. This enzyme shows activity on L-Leu. This enzyme inhibits platelet aggregation in human platelet rich plasma induced by ADP (IC(50)=3.2 mg/mL), and shows antibacterial activities on both Gram-positive and Gram-negative bacteria (P.aeruginosa, V.cholerae, S.aureus, E.faecalis and E.coli). These two effects are due to hydrogen peroxide, since they are inhibited by catalase. It also induces edema in mouse paw pads but does not show hemolytic activity. This protein may also have activities in hemorrhage, and apoptosis. The sequence is that of L-amino acid oxidase from Bothrops pictus (Desert lancehead).